The sequence spans 287 residues: ATP phosphoribosyltransferase (287 aa).

This sequence belongs to the ATP phosphoribosyltransferase family. Long subfamily. In terms of assembly, equilibrium between an active dimeric form, an inactive hexameric form and higher aggregates. Interconversion between the various forms is largely reversible and is influenced by the natural substrates and inhibitors of the enzyme. It depends on Mg(2+) as a cofactor.

The protein localises to the cytoplasm. It carries out the reaction 1-(5-phospho-beta-D-ribosyl)-ATP + diphosphate = 5-phospho-alpha-D-ribose 1-diphosphate + ATP. It participates in amino-acid biosynthesis; L-histidine biosynthesis; L-histidine from 5-phospho-alpha-D-ribose 1-diphosphate: step 1/9. With respect to regulation, feedback inhibited by histidine. Functionally, catalyzes the condensation of ATP and 5-phosphoribose 1-diphosphate to form N'-(5'-phosphoribosyl)-ATP (PR-ATP). Has a crucial role in the pathway because the rate of histidine biosynthesis seems to be controlled primarily by regulation of HisG enzymatic activity. The protein is ATP phosphoribosyltransferase (hisG) of Mycobacterium leprae (strain TN).